The chain runs to 261 residues: Hydroxyethylthiazole kinase (261 aa).

Met-40 contributes to the substrate binding site. Lys-116 and Thr-162 together coordinate ATP. Gly-189 lines the substrate pocket.

This sequence belongs to the Thz kinase family. It depends on Mg(2+) as a cofactor.

It carries out the reaction 5-(2-hydroxyethyl)-4-methylthiazole + ATP = 4-methyl-5-(2-phosphooxyethyl)-thiazole + ADP + H(+). It participates in cofactor biosynthesis; thiamine diphosphate biosynthesis; 4-methyl-5-(2-phosphoethyl)-thiazole from 5-(2-hydroxyethyl)-4-methylthiazole: step 1/1. Catalyzes the phosphorylation of the hydroxyl group of 4-methyl-5-beta-hydroxyethylthiazole (THZ). The polypeptide is Hydroxyethylthiazole kinase (Methanosarcina mazei (strain ATCC BAA-159 / DSM 3647 / Goe1 / Go1 / JCM 11833 / OCM 88) (Methanosarcina frisia)).